The following is a 146-amino-acid chain: MKLHELRPAEGSKKAPKRVGRGNGSGLGKTAGKGHKGQNARSGGGVRPGFEGGQMPLYRRLPKRGFTNIFAKEYVEVNVSRLNIFEDGTEVTPEVLKANGVISKVKDGVKILGNGTLEKKLTIKATKFTKGAVEKIESIGGKAEVI.

The span at 1 to 13 (MKLHELRPAEGSK) shows a compositional bias: basic and acidic residues. Positions 1–54 (MKLHELRPAEGSKKAPKRVGRGNGSGLGKTAGKGHKGQNARSGGGVRPGFEGGQ) are disordered. Composition is skewed to gly residues over residues 21-31 (RGNGSGLGKTA) and 42-52 (SGGGVRPGFEG).

The protein belongs to the universal ribosomal protein uL15 family. Part of the 50S ribosomal subunit.

In terms of biological role, binds to the 23S rRNA. This chain is Large ribosomal subunit protein uL15, found in Clostridium novyi (strain NT).